The chain runs to 547 residues: Collagen EMF1-alpha (547 aa).

Disordered stretches follow at residues 1–99 (GVPG…APGV) and 116–311 (GPDG…GGGI). The interval 1-280 (GVPGPNGDVG…QGPRGGQGPK (280 aa)) is triple-helical region. Composition is skewed to low complexity over residues 27–69 (QGPD…IRGQ) and 160–175 (QGSK…VGPQ). Position 187 is an allysine (Lys-187). Over residues 219–228 (VKGEKGEVGD) the composition is skewed to basic and acidic residues. Residues 246–271 (DAGPAGPIGDAGIQGPPGQDGPTGAQ) show a composition bias toward low complexity. Over residues 272 to 281 (GPRGGQGPKG) the composition is skewed to gly residues. The telopeptide stretch occupies residues 308-336 (GGGIILVPVNDQNPTRSPVSGSVFYRGQA). Positions 337–547 (EETDVNLGSV…GFEMGPACFY (211 aa)) are cleaved as a propeptide — C-terminal propeptide. The Fibrillar collagen NC1 domain occupies 343 to 547 (LGSVADVIEL…GFEMGPACFY (205 aa)). Asn-381 and Asn-406 each carry an N-linked (GlcNAc...) asparagine glycan.

It belongs to the fibrillar collagen family.

It is found in the secreted. It localises to the extracellular space. The protein resides in the extracellular matrix. The polypeptide is Collagen EMF1-alpha (COLF1) (Ephydatia muelleri (Mueller's freshwater sponge)).